The following is a 620-amino-acid chain: MALLQIAEPGQSPQPHQRRLAVGIDLGTTNSMVAALRSGRSEPLPDAQGNVILPSAVRYLEGRNEVGQAARDAASSDPLNTVLSVKRLMGRGLADVKQLGEQLPYRFVGGESHMPFIDTVQGPKSPVEVSADILKVLRERAEATLGGELVGAVITVPAYFDDAQRQATKDAARLAGLNVLRLLNEPTAAAVAYGLDQNAEGVVAIYDLGGGTFDISILRLTAGVFEVLATGGDTALGGDDFDHAIAGWIIEQAGLSSDLDPATQRALLQTACAAKEALTDADVVSVSHGAWHGELTRNAFEAMIEPLVARSLKACRRAVRDSGVELEEVSAVVMVGGSTRVPRVREAVGALFGRTPLTSIDPDQVVAIGAAIQADTLAGNRREGGELLLLDVIPLSLGLETMGGLMEKVIPRNTTIPVARAQEFTTYKDGQSAMMIHVLQGERELISDCRSLARFELRGIPAMVAGAAKIRVTFQVDADGLLSVAARELGSGVEASIQVKPSYGLTDGEIARMLKDSFEHAGSDKHARQLREHQVDGERLLEAVQGALDADGDRLLSSDERDAIEFQMQELRDLLAGTDGAAIEQQTKRLSQVTDAFAARRLDSTVKAALAGRNLNEIEE.

The protein belongs to the heat shock protein 70 family.

Its function is as follows. Chaperone involved in the maturation of iron-sulfur cluster-containing proteins. Has a low intrinsic ATPase activity which is markedly stimulated by HscB. This Pseudomonas putida (strain ATCC 47054 / DSM 6125 / CFBP 8728 / NCIMB 11950 / KT2440) protein is Chaperone protein HscA homolog.